The chain runs to 580 residues: Micronemal protein 4 (580 aa).

The signal sequence occupies residues 1–25 (MRASLPVHLVVCTQLSAVWFGVAKA). Apple domains follow at residues 68–137 (CVHS…SRSC), 141–214 (CFEQ…KQFC), 232–301 (CIQL…PKSC), 305–375 (CFSN…VTVG), 419–488 (CVHT…SRTC), and 492–565 (CLRR…YTFC). 15 disulfide bridges follow: Cys68-Cys137, Cys93-Cys115, Cys97-Cys103, Cys141-Cys214, Cys166-Cys188, Cys170-Cys176, Cys232-Cys301, Cys257-Cys279, Cys261-Cys267, Cys305-Cys380, Cys332-Cys354, Cys336-Cys342, Cys419-Cys488, Cys444-Cys466, and Cys448-Cys454.

Monomer. Part of the MIC6-MIC1-MIC4 complex. Interacts (via the second apple domain) directly with MIC1 (via the beta-finger region). Interacts with murine TLR2; the interaction promotes activation of bone marrow-derived dendritic cells and macrophages in the host. Interacts with murine TLR4; the interaction promotes activation of bone marrow-derived dendritic cells and macrophages in the host. Post-translationally, proteolytically cleaved at the N- and C-terminus after release from the microneme.

The protein resides in the cytoplasmic vesicle. It is found in the secretory vesicle. It localises to the microneme. Its subcellular location is the host early endosome. Lacto-N-biose inhibits binding to asialofetuin, a host glycoprotein. Its function is as follows. Soluble adhesin with carbohydrate-binding activity. Binds to galactose-terminating oligosaccharides. Required for attachment of the parasite to the host cell prior to invasion. Triggers the activation of murine bone marrow-derived dendritic cells and macrophages and production of pro-inflammatory cytokines, such as IL12 (IL12B/IL12A), in host TLR2/TLR4-dependent manner. Triggers the production of anti-inflammatory cytokine IL10 in murine bone marrow-derived macrophages in host TLR4-dependent manner. Induces transient endotoxin tolerance in murine bone marrow-derived macrophages, manifested by reduced TNF-alpha (TNF) production in response to challenge with lipopolysaccharides (LPS). This is Micronemal protein 4 from Toxoplasma gondii.